The following is a 346-amino-acid chain: UDP-N-acetylenolpyruvoylglucosamine reductase (346 aa).

The region spanning 23–194 (FDVRARLACR…VSVTFRLPKV (172 aa)) is the FAD-binding PCMH-type domain. The active site involves Arg170. Catalysis depends on Ser246, which acts as the Proton donor. Glu342 is a catalytic residue.

It belongs to the MurB family. Requires FAD as cofactor.

The protein localises to the cytoplasm. The catalysed reaction is UDP-N-acetyl-alpha-D-muramate + NADP(+) = UDP-N-acetyl-3-O-(1-carboxyvinyl)-alpha-D-glucosamine + NADPH + H(+). Its pathway is cell wall biogenesis; peptidoglycan biosynthesis. In terms of biological role, cell wall formation. In Paraburkholderia phymatum (strain DSM 17167 / CIP 108236 / LMG 21445 / STM815) (Burkholderia phymatum), this protein is UDP-N-acetylenolpyruvoylglucosamine reductase.